The following is a 368-amino-acid chain: 2-aminoethylphosphonate--pyruvate transaminase (368 aa).

Lys-192 is subject to N6-(pyridoxal phosphate)lysine.

It belongs to the class-V pyridoxal-phosphate-dependent aminotransferase family. PhnW subfamily. As to quaternary structure, homodimer. Pyridoxal 5'-phosphate is required as a cofactor.

It catalyses the reaction (2-aminoethyl)phosphonate + pyruvate = phosphonoacetaldehyde + L-alanine. Its function is as follows. Involved in phosphonate degradation. The sequence is that of 2-aminoethylphosphonate--pyruvate transaminase from Pseudomonas putida (strain W619).